We begin with the raw amino-acid sequence, 148 residues long: Large ribosomal subunit protein uL15 (148 aa).

The span at 1–12 shows a compositional bias: basic and acidic residues; that stretch reads MSEPIKLHDLRP. Residues 1–52 form a disordered region; sequence MSEPIKLHDLRPAKGANKPKTRVGRGEASKGKTAGRGTKGTKARKQVSAAFE.

This sequence belongs to the universal ribosomal protein uL15 family. In terms of assembly, part of the 50S ribosomal subunit.

Its function is as follows. Binds to the 23S rRNA. This Corynebacterium diphtheriae (strain ATCC 700971 / NCTC 13129 / Biotype gravis) protein is Large ribosomal subunit protein uL15.